A 395-amino-acid chain; its full sequence is Phosphoglycerate kinase (395 aa).

Residues 22–24, R37, 60–63, R116, and R149 contribute to the substrate site; these read DLN and HFGR. Residues K199, E322, and 352–355 contribute to the ATP site; that span reads GGDT.

It belongs to the phosphoglycerate kinase family. As to quaternary structure, monomer.

It is found in the cytoplasm. It catalyses the reaction (2R)-3-phosphoglycerate + ATP = (2R)-3-phospho-glyceroyl phosphate + ADP. It participates in carbohydrate degradation; glycolysis; pyruvate from D-glyceraldehyde 3-phosphate: step 2/5. This chain is Phosphoglycerate kinase, found in Novosphingobium aromaticivorans (strain ATCC 700278 / DSM 12444 / CCUG 56034 / CIP 105152 / NBRC 16084 / F199).